Here is a 276-residue protein sequence, read N- to C-terminus: Methylesterase 17 (276 aa).

Residues Pro-19 to Pro-138 enclose the AB hydrolase-1 domain. The active-site Acyl-ester intermediate is Ser-95. Active-site charge relay system residues include Asp-225 and His-252.

Belongs to the AB hydrolase superfamily. Methylesterase family. Expressed in several tissues of seedlings and adult plants, with a higher relative level of expression in the seedling shoot apex and the adult stem.

It catalyses the reaction methyl (indol-3-yl)acetate + H2O = (indol-3-yl)acetate + methanol + H(+). It participates in plant hormone biosynthesis. Functionally, methylesterase that efficiently and specifically hydrolyzes methyl indole-3-acetic acid (MeIAA) to IAA (auxin). MeIAA is believed to be an inactive form of auxin that needs to be demethylated to exert a biological effect. This Arabidopsis thaliana (Mouse-ear cress) protein is Methylesterase 17.